The sequence spans 73 residues: Conotoxin Cl14.8 (73 aa).

A signal peptide spans 1 to 19; the sequence is MKLSVTFIALMLTMTLTQG. A propeptide spanning residues 20–47 is cleaved from the precursor; that stretch reads FVLQAIDGRDNSGLDDLSEADSMEHQLQ.

Belongs to the conotoxin L superfamily. Contains 2 disulfide bonds. In terms of tissue distribution, expressed by the venom duct.

It is found in the secreted. This chain is Conotoxin Cl14.8, found in Californiconus californicus (California cone).